The primary structure comprises 144 residues: MTRSALQMGRLTLVLCLLLQLVLVTQACFLGNCLNDGERDVDGREAMRPCKYCSFGQCVGPQICCGDRGCEMGSEEANKCREEDEDSTPCQVFGWPCTLNNPGNTNGKCVANCIGICCVTDTCVVSSECQKESKSGIRVGCQRS.

An N-terminal signal peptide occupies residues 1-27; that stretch reads MTRSALQMGRLTLVLCLLLQLVLVTQA. A disulfide bridge connects residues C28 and C33. Residue D36 is modified to Aspartic acid 1-amide. The propeptide occupies 37–44; it reads GERDVDGR. 7 cysteine pairs are disulfide-bonded: C50–C90, C53–C64, C58–C80, C65–C70, C97–C117, C109–C129, and C118–C123. Positions 131–144 are excised as a propeptide; the sequence is KESKSGIRVGCQRS.

The protein belongs to the vasopressin/oxytocin family. As to expression, expressed by the venom duct.

Its subcellular location is the secreted. This chain is Conopressin-conophysin, found in Conus bayani (Bayan's cone).